The chain runs to 428 residues: Cholesterol 7-desaturase (428 aa).

Residues 6–26 traverse the membrane as a helical segment; it reads IWGFLTAHPISVVTTILIVYL. Positions 81-187 constitute a Rieske domain; it reads WYCVCESEKL…CIERNNNIYL (107 aa). Residues Cys-122, His-124, Cys-143, and His-146 each contribute to the [2Fe-2S] cluster site.

This sequence belongs to the cholesterol 7-desaturase family. [2Fe-2S] cluster is required as a cofactor. As to expression, expressed in intestine at all postembryonic stages, including dauer. Expression is reduced in daf-2 mutants.

It localises to the membrane. It catalyses the reaction cholesterol + NADPH + O2 + H(+) = 7-dehydrocholesterol + NADP(+) + 2 H2O. The enzyme catalyses cholesterol + NADH + O2 + H(+) = 7-dehydrocholesterol + NAD(+) + 2 H2O. The protein operates within steroid hormone biosynthesis; dafachronic acid biosynthesis. Its function is as follows. Catalyzes the production of 7-dehydrocholesterol (7-DHC or cholesta-5,7-dien-3beta-ol) by inserting a double bond (desaturating) at the C7-C8 single bond of cholesterol. This reaction is the first step in the synthesis of the steroid hormone Delta(7)-dafachronic acid (one of the principal steroid hormones in nematodes). Dafachronic acids bind directly to the nuclear hormone receptor (NHR) daf-12, suppressing dauer formation and inducing reproductive growth. The sequence is that of Cholesterol 7-desaturase (daf-36) from Caenorhabditis elegans.